Here is a 177-residue protein sequence, read N- to C-terminus: Inner membrane-spanning protein YciB (177 aa).

The next 5 helical transmembrane spans lie at 22 to 42 (IFIA…LYWI), 50 to 70 (INLF…IFHN), 76 to 96 (WKIT…QFFM), 121 to 141 (FFWA…ALCL), and 151 to 171 (VFGL…YINF).

It belongs to the YciB family.

Its subcellular location is the cell inner membrane. In terms of biological role, plays a role in cell envelope biogenesis, maintenance of cell envelope integrity and membrane homeostasis. This Buchnera aphidicola subsp. Schizaphis graminum (strain Sg) protein is Inner membrane-spanning protein YciB.